Here is a 144-residue protein sequence, read N- to C-terminus: MKLNELKPATGSRSKRLRKGRGLSSGHGFTSGRGTKGQKAHGKTRLGFEGGQMPLYRQIPKRGFTNINRKEYAIVNLASLNKFDDGTEVTPQLLMESGLVKNLKSGIKVLGSGKLEKKLTVKANKFSASAVSAIEAAGGKTEVM.

The segment at methionine 1–glycine 51 is disordered. The span at leucine 23–threonine 35 shows a compositional bias: gly residues.

The protein belongs to the universal ribosomal protein uL15 family. In terms of assembly, part of the 50S ribosomal subunit.

Functionally, binds to the 23S rRNA. The polypeptide is Large ribosomal subunit protein uL15 (Limosilactobacillus reuteri (strain DSM 20016) (Lactobacillus reuteri)).